The chain runs to 439 residues: Rhodopsin (439 aa).

Asparagine 1 carries N-linked (GlcNAc...) asparagine glycosylation. The Extracellular segment spans residues 1–26 (NETWWYNPYMDIHSHWKQFDQVPAAV). Residues 27 to 51 (YYSLGIFIAICGIIGCAGNGIVIYL) form a helical membrane-spanning segment. At 52 to 63 (FTKTKSLQTPAN) the chain is on the cytoplasmic side. Residues 64-90 (MFIINLAFSDFTFSLVNGFPMMTISCF) form a helical membrane-spanning segment. Over 91 to 102 (LKHWVFGQAACK) the chain is Extracellular. A disulfide bond links cysteine 101 and cysteine 179. A helical transmembrane segment spans residues 103 to 124 (VYGLIGGIFGLTSIMTMTMISI). The short motif at 125–127 (DRY) is the 'Ionic lock' involved in activated form stabilization element. Over 125–144 (DRYNVIRRPMSASKKMSHRK) the chain is Cytoplasmic. Residues 145 to 165 (AFIMIVFVWIWSTIWAIGPIF) traverse the membrane as a helical segment. The Extracellular portion of the chain corresponds to 166–192 (GWGAYQLEGVLCNCSFDYITRDASTRS). The chain crosses the membrane as a helical span at residues 193 to 217 (NIVCMYIFAFMFPIVVIFFCYFNIV). Over 218–254 (MSVSNHEKEMAAMAKRLNAKELRKAQAGASAEMKLAK) the chain is Cytoplasmic. The helical transmembrane segment at 255–276 (ISIVIVTQSLLSWSPYAIVALL) threads the bilayer. The Extracellular segment spans residues 277-286 (AQFGPIEWVT). The chain crosses the membrane as a helical span at residues 287–308 (PYAAQLPVMFAKASAIHNPMIY). The residue at position 298 (lysine 298) is an N6-(retinylidene)lysine. Over 309–439 (SVSHPKFREA…PQAAPPQGVD (131 aa)) the chain is Cytoplasmic. S-palmitoyl cysteine attachment occurs at residues cysteine 329 and cysteine 330. Low complexity predominate over residues 369–381 (MMQKMQAQQQQQP). The tract at residues 369 to 439 (MMQKMQAQQQ…PQAAPPQGVD (71 aa)) is disordered. The segment covering 382–433 (AYPPQGYPPQGYPPPPPQGYPPQGYPPQGYPPQGYPPPPQGPPPQGPPPQAA) has biased composition (pro residues).

This sequence belongs to the G-protein coupled receptor 1 family. Opsin subfamily. Post-translationally, contains one covalently linked retinal chromophore. Upon light absorption, the covalently bound 11-cis-retinal is converted to all-trans-retinal. After hydrolysis of the Schiff base and release of the covalently bound all-trans-retinal, active rhodopsin is regenerated by binding of a fresh molecule of 11-cis-retinal.

The protein localises to the cell projection. The protein resides in the rhabdomere membrane. Its function is as follows. Photoreceptor required for image-forming vision at low light intensity. Light-induced isomerization of 11-cis to all-trans retinal triggers a conformational change that activates signaling via G-proteins. Signaling mediates the activation of phospholipase C. Subsequent receptor phosphorylation mediates displacement of the bound G-protein alpha subunit by arrestin and terminates signaling. The polypeptide is Rhodopsin (RHO) (Alloteuthis subulata (Squid)).